Consider the following 202-residue polypeptide: Ribosomal RNA small subunit methyltransferase G (202 aa).

Residues Gly-75, Phe-80, 125-126, and Arg-139 contribute to the S-adenosyl-L-methionine site; that span reads VQ.

Belongs to the methyltransferase superfamily. RNA methyltransferase RsmG family.

The protein localises to the cytoplasm. Functionally, specifically methylates the N7 position of a guanine in 16S rRNA. The sequence is that of Ribosomal RNA small subunit methyltransferase G from Mesomycoplasma hyopneumoniae (strain 232) (Mycoplasma hyopneumoniae).